A 440-amino-acid polypeptide reads, in one-letter code: T-box transcription factor T homolog 2 (440 aa).

The T-box DNA-binding region spans 44–215; that stretch reads LWEKFKSLTN…HNPFAKAFLD (172 aa). 2 disordered regions span residues 282 to 303 and 393 to 440; these read APYP…DTAA and TTAS…MPSM. Residues 409 to 440 show a composition bias toward polar residues; the sequence is STDSGYGHSTTPPAPQTRITSNNWSPMTMPSM.

In terms of tissue distribution, mesoderm and notochord.

The protein localises to the nucleus. Involved in the transcriptional regulation of genes required for mesoderm formation and differentiation. This chain is T-box transcription factor T homolog 2, found in Branchiostoma floridae (Florida lancelet).